The following is a 335-amino-acid chain: Beta-ketoacyl-[acyl-carrier-protein] synthase III 1 (335 aa).

Catalysis depends on residues C116 and H256. The tract at residues 257–261 (QANQR) is ACP-binding. N286 is an active-site residue.

It belongs to the thiolase-like superfamily. FabH family. In terms of assembly, homodimer.

It localises to the cytoplasm. The catalysed reaction is malonyl-[ACP] + acetyl-CoA + H(+) = 3-oxobutanoyl-[ACP] + CO2 + CoA. Its pathway is lipid metabolism; fatty acid biosynthesis. Catalyzes the condensation reaction of fatty acid synthesis by the addition to an acyl acceptor of two carbons from malonyl-ACP. Catalyzes the first condensation reaction which initiates fatty acid synthesis and may therefore play a role in governing the total rate of fatty acid production. Possesses both acetoacetyl-ACP synthase and acetyl transacylase activities. Its substrate specificity determines the biosynthesis of branched-chain and/or straight-chain of fatty acids. The polypeptide is Beta-ketoacyl-[acyl-carrier-protein] synthase III 1 (Bacteroides thetaiotaomicron (strain ATCC 29148 / DSM 2079 / JCM 5827 / CCUG 10774 / NCTC 10582 / VPI-5482 / E50)).